The primary structure comprises 142 residues: Transcriptional regulator MraZ (142 aa).

SpoVT-AbrB domains follow at residues 5 to 47 (RFTH…PMDS) and 76 to 119 (ATVV…SPEN).

It belongs to the MraZ family. As to quaternary structure, forms oligomers.

Its subcellular location is the cytoplasm. It is found in the nucleoid. The sequence is that of Transcriptional regulator MraZ from Thermomicrobium roseum (strain ATCC 27502 / DSM 5159 / P-2).